We begin with the raw amino-acid sequence, 1034 residues long: Potassium-transporting ATPase alpha chain 1 (1034 aa).

At 1–97 (MGKAENYELY…NALRPPRGTP (97 aa)) the chain is on the cytoplasmic side. Phosphotyrosine is present on residues Tyr7 and Tyr10. Residues 14–41 (LGSGPGGDMTAKMSKKKAGGGGGKKKEK) are disordered. The span at 26–39 (MSKKKAGGGGGKKK) shows a compositional bias: basic residues. Ser27 bears the Phosphoserine mark. Residues 98-118 (EYVKFARQLAGGLQCLMWVAA) form a helical membrane-spanning segment. The Lumenal portion of the chain corresponds to 119–141 (AICLIAFAIQASEGDLTTDDNLY). The chain crosses the membrane as a helical span at residues 142 to 162 (LAVALIAVVVVTGCFGYYQEF). The Cytoplasmic segment spans residues 163 to 298 (KSTNIIASFK…NEKTPIAIEI (136 aa)). A helical membrane pass occupies residues 299 to 318 (EHFVDIIAGLAILFGATFFV). Residues 319–330 (VAMCIGYTFLRA) lie on the Lumenal side of the membrane. Residues 331–348 (MVFFMAIVVAYVPEGLLA) form a helical membrane-spanning segment. K(+)-binding residues include Val339, Ala340, Val342, and Glu344. Topologically, residues 349–782 (TVTVCLSLTA…EQGRLIFDNL (434 aa)) are cytoplasmic. Residue Asp386 is the 4-aspartylphosphate intermediate of the active site. Mg(2+) contacts are provided by Asp386 and Thr388. A phosphoserine mark is found at Ser462 and Ser600. Asp727 and Asp731 together coordinate Mg(2+). The chain crosses the membrane as a helical span at residues 783-802 (KKSIAYTLTKNIPELTPYLI). Glu796 lines the K(+) pocket. The Lumenal segment spans residues 803–812 (YITVSVPLPL). Residues 813 to 833 (GCITILFIELCTDIFPSVSLA) traverse the membrane as a helical segment. Glu821 serves as a coordination point for K(+). At 834–853 (YEKAESDIMHLRPRNPKRDR) the chain is on the cytoplasmic side. The residue at position 839 (Ser839) is a Phosphoserine. Residues 854–876 (LVNEPLAAYSYFQIGAIQSFAGF) traverse the membrane as a helical segment. Over 877–928 (ADYFTAMAQEGWFPLLCVGLRPQWEDHHLQDLQDSYGQEWTFGQRLYQQYTC) the chain is Lumenal. A helical membrane pass occupies residues 929–948 (YTVFFISIEMCQIADVLIRK). At 949 to 962 (TRRLSVFQQGFFRN) the chain is on the cytoplasmic side. Ser953 carries the phosphoserine; by PKA modification. A helical membrane pass occupies residues 963 to 981 (KILVIAIVFQVCIGCFLCY). At 982 to 996 (CPGMPNIFNFMPIRF) the chain is on the lumenal side. A helical transmembrane segment spans residues 997-1017 (QWWLVPMPFGLLIFVYDEIRK). At 1018–1034 (LGVRCCPGSWWDQELYY) the chain is on the cytoplasmic side.

Belongs to the cation transport ATPase (P-type) (TC 3.A.3) family. Type IIC subfamily. The gastric H(+)/K(+) ATPase pump is composed of the catalytic alpha subunit ATP4A and the regulatory beta subunit ATP4B. Interacts (via the P-domain) with ATP4B (via N-terminus); this interaction stabilizes the lumenal-open E2 conformation state and prevents the reverse reaction of the transport cycle. In terms of tissue distribution, expressed in parietal cells (at protein level).

The protein localises to the apical cell membrane. The catalysed reaction is K(+)(out) + ATP + H2O + H(+)(in) = K(+)(in) + ADP + phosphate + 2 H(+)(out). In terms of biological role, the catalytic subunit of the gastric H(+)/K(+) ATPase pump which transports H(+) ions in exchange for K(+) ions across the apical membrane of parietal cells. Uses ATP as an energy source to pump H(+) ions to the gastric lumen while transporting K(+) ion from the lumen into the cell. Remarkably generates a million-fold proton gradient across the gastric parietal cell membrane, acidifying the gastric juice down to pH 1. Within a transport cycle, the transfer of a H(+) ion across the membrane is coupled to ATP hydrolysis and is associated with a transient phosphorylation that shifts the pump conformation from inward-facing (E1) to outward-facing state (E2). The release of the H(+) ion in the stomach lumen is followed by binding of K(+) ion converting the pump conformation back to the E1 state. This chain is Potassium-transporting ATPase alpha chain 1, found in Mus musculus (Mouse).